Here is a 157-residue protein sequence, read N- to C-terminus: NADPH-dependent 7-cyano-7-deazaguanine reductase (157 aa).

Cys55 serves as the catalytic Thioimide intermediate. The active-site Proton donor is Asp62. Residues Val77–Ser79 and His96–Glu97 each bind substrate.

It belongs to the GTP cyclohydrolase I family. QueF type 1 subfamily.

The protein localises to the cytoplasm. It carries out the reaction 7-aminomethyl-7-carbaguanine + 2 NADP(+) = 7-cyano-7-deazaguanine + 2 NADPH + 3 H(+). It functions in the pathway tRNA modification; tRNA-queuosine biosynthesis. Functionally, catalyzes the NADPH-dependent reduction of 7-cyano-7-deazaguanine (preQ0) to 7-aminomethyl-7-deazaguanine (preQ1). This chain is NADPH-dependent 7-cyano-7-deazaguanine reductase, found in Neisseria gonorrhoeae (strain ATCC 700825 / FA 1090).